Reading from the N-terminus, the 536-residue chain is Transcriptional regulator RPN4 (536 aa).

Low complexity-rich tracts occupy residues 154 to 181 and 361 to 370; these read QEQQ…QQQQ and SPSAISPASP. 3 disordered regions span residues 154 to 196, 353 to 375, and 393 to 434; these read QEQQ…TRRR, VFDQ…SDDM, and EEIN…AEIT. Basic and acidic residues predominate over residues 393–411; the sequence is EEINKKHSKSGKKESKSQK. A C2H2-type zinc finger spans residues 440–471; the sequence is HQCNLINPSTGEPCNKQFSRPYDLIRHQDTIH.

It is found in the nucleus. Functionally, transcriptional activator of a number of genes encoding proteasomal subunits. Binds to the DNA sequence 5'-GAAGGCAAAA-3', enriched in regions upstream of proteasome genes. The polypeptide is Transcriptional regulator RPN4 (RPN4) (Candida albicans (strain SC5314 / ATCC MYA-2876) (Yeast)).